Here is a 779-residue protein sequence, read N- to C-terminus: Endoribonuclease YSH1 (779 aa).

Histidine 68, histidine 70, aspartate 72, histidine 73, histidine 163, and aspartate 184 together coordinate Zn(2+). Residue histidine 408 is the Proton donor of the active site. Histidine 430 contributes to the Zn(2+) binding site. Position 517 is a phosphoserine; by ATM or ATR (serine 517).

This sequence belongs to the metallo-beta-lactamase superfamily. RNA-metabolizing metallo-beta-lactamase-like family. CPSF2/YSH1 subfamily. As to quaternary structure, component of the cleavage and polyadenylation factor (CPF) complex, which is composed of at least PTI1, SYC1, SSU72, GLC7, MPE1, REF2, PFS2, PTA1, YSH1/BRR5, SWD2, CFT2/YDH1, YTH1, CFT1/YHH1, FIP1 and PAP1. Interacts with FIP1, PFS2, RNA14 and YTH1. It depends on Zn(2+) as a cofactor.

The protein localises to the nucleus. Functionally, component of the cleavage and polyadenylation factor (CPF) complex, which plays a key role in polyadenylation-dependent pre-mRNA 3'-end formation and cooperates with cleavage factors including the CFIA complex and NAB4/CFIB. Has endonuclease activity. The chain is Endoribonuclease YSH1 (YSH1) from Saccharomyces cerevisiae (strain ATCC 204508 / S288c) (Baker's yeast).